The chain runs to 351 residues: Photosystem II D2 protein (351 aa).

A helical membrane pass occupies residues 39-59; sequence CAYMAIGGWLTGTTFATSWYT. His-116 serves as a coordination point for chlorophyll a. A helical membrane pass occupies residues 123–139; it reads GFMLRQFEIARLVGVRP. Pheophytin a-binding residues include Gln-128 and Asn-141. A helical membrane pass occupies residues 151–164; the sequence is LFVSVFLIYPLGQS. Position 196 (His-196) interacts with chlorophyll a. Residues 206-226 form a helical membrane-spanning segment; sequence GALLCAIHGATVENTLFEDGD. Positions 213 and 260 each coordinate a plastoquinone. A Fe cation-binding site is contributed by His-213. His-267 serves as a coordination point for Fe cation. Residues 277 to 293 form a helical membrane-spanning segment; sequence GLWMSAIGVVGLALNLR.

It belongs to the reaction center PufL/M/PsbA/D family. As to quaternary structure, PSII is composed of 1 copy each of membrane proteins PsbA, PsbB, PsbC, PsbD, PsbE, PsbF, PsbH, PsbI, PsbJ, PsbK, PsbL, PsbM, PsbT, PsbX, PsbY, PsbZ, Psb30/Ycf12, peripheral proteins PsbO, CyanoQ (PsbQ), PsbU, PsbV and a large number of cofactors. It forms dimeric complexes. The D1/D2 heterodimer binds P680, chlorophylls that are the primary electron donor of PSII, and subsequent electron acceptors. It shares a non-heme iron and each subunit binds pheophytin, quinone, additional chlorophylls, carotenoids and lipids. There is also a Cl(-1) ion associated with D1 and D2, which is required for oxygen evolution. The PSII complex binds additional chlorophylls, carotenoids and specific lipids. serves as cofactor.

Its subcellular location is the cellular thylakoid membrane. It catalyses the reaction 2 a plastoquinone + 4 hnu + 2 H2O = 2 a plastoquinol + O2. Functionally, photosystem II (PSII) is a light-driven water:plastoquinone oxidoreductase that uses light energy to abstract electrons from H(2)O, generating O(2) and a proton gradient subsequently used for ATP formation. It consists of a core antenna complex that captures photons, and an electron transfer chain that converts photonic excitation into a charge separation. The D1/D2 (PsbA/PsbD) reaction center heterodimer binds P680, the primary electron donor of PSII as well as several subsequent electron acceptors. D2 is needed for assembly of a stable PSII complex. The sequence is that of Photosystem II D2 protein from Prochlorothrix hollandica.